The sequence spans 201 residues: Small ribosomal subunit protein uS4c (201 aa).

Positions 15–43 (LGALPGLTSKRPSPGSDLRNQSRSGKRSQ) are disordered. One can recognise an S4 RNA-binding domain in the interval 89–150 (MRLDNILFRL…EQRSRALIQK (62 aa)).

This sequence belongs to the universal ribosomal protein uS4 family. As to quaternary structure, part of the 30S ribosomal subunit. Contacts protein S5. The interaction surface between S4 and S5 is involved in control of translational fidelity.

The protein localises to the plastid. The protein resides in the chloroplast. In terms of biological role, one of the primary rRNA binding proteins, it binds directly to 16S rRNA where it nucleates assembly of the body of the 30S subunit. Functionally, with S5 and S12 plays an important role in translational accuracy. The protein is Small ribosomal subunit protein uS4c (rps4) of Ceratophyllum demersum (Rigid hornwort).